Reading from the N-terminus, the 284-residue chain is NAD kinase (284 aa).

Asp-70 (proton acceptor) is an active-site residue. Residues 70–71 (DG), 139–140 (NE), Lys-167, Asp-169, Leu-177, 180–185 (TAYNLS), and Gln-236 contribute to the NAD(+) site.

This sequence belongs to the NAD kinase family. It depends on a divalent metal cation as a cofactor.

The protein localises to the cytoplasm. The enzyme catalyses NAD(+) + ATP = ADP + NADP(+) + H(+). In terms of biological role, involved in the regulation of the intracellular balance of NAD and NADP, and is a key enzyme in the biosynthesis of NADP. Catalyzes specifically the phosphorylation on 2'-hydroxyl of the adenosine moiety of NAD to yield NADP. This is NAD kinase from Helicobacter pylori (strain HPAG1).